A 233-amino-acid polypeptide reads, in one-letter code: ATP synthase subunit a (233 aa).

Transmembrane regions (helical) follow at residues 29–49 (FKHV…GLIV), 86–106 (VFPL…LGLV), 118–135 (TNAA…YQGL), 188–208 (VLFF…LFLL), and 209–229 (GKVL…KGAF).

The protein belongs to the ATPase A chain family. F-type ATPases have 2 components, CF(1) - the catalytic core - and CF(0) - the membrane proton channel. CF(1) has five subunits: alpha(3), beta(3), gamma(1), delta(1), epsilon(1). CF(0) has three main subunits: a(1), b(2) and c(9-12). The alpha and beta chains form an alternating ring which encloses part of the gamma chain. CF(1) is attached to CF(0) by a central stalk formed by the gamma and epsilon chains, while a peripheral stalk is formed by the delta and b chains.

It localises to the cell inner membrane. Functionally, key component of the proton channel; it plays a direct role in the translocation of protons across the membrane. This Nitratidesulfovibrio vulgaris (strain ATCC 29579 / DSM 644 / CCUG 34227 / NCIMB 8303 / VKM B-1760 / Hildenborough) (Desulfovibrio vulgaris) protein is ATP synthase subunit a.